The chain runs to 495 residues: UDP-glycosyltransferase 73C12 (495 aa).

Catalysis depends on histidine 24, which acts as the Proton acceptor. Histidine 24 is an an anthocyanidin binding site. Aspartate 129 (charge relay) is an active-site residue. 7 residues coordinate UDP-alpha-D-glucose: alanine 356, glutamine 358, histidine 373, tryptophan 376, asparagine 377, serine 378, and glutamate 381. Alanine 396 lines the an anthocyanidin pocket. Residues aspartate 397 and glutamine 398 each contribute to the UDP-alpha-D-glucose site.

Belongs to the UDP-glycosyltransferase family.

It carries out the reaction oleanolate + UDP-alpha-D-glucose = oleanolate 3-O-beta-D-glucoside + UDP + H(+). Functionally, catalyzes the transfer of a glucose (Glc) moiety from UDP-Glc to the C-3 position of the oleanane sapogenins oleanolate and hederagenin, and to the C-28 carboxylic group of the lupane sapogenin betulinate. The monoglucosylated hederagenin 3-O-beta-D-glucoside is a feeding deterrent of the yellow-striped flea beetle (Phyllotreta nemorum). The sequence is that of UDP-glycosyltransferase 73C12 from Barbarea vulgaris (Yellow rocket).